A 157-amino-acid chain; its full sequence is MAAGPQSSGAAVSAAAYPDSPVELPARLQKGAMRRRFWGVFNCLCAGAFGALAAAAAKLAFGSQVNIGLCVLGIVAMASANSLMWTFFSRGLSFSMSSAIASVTVTFSNILCSAILGYLLYGECQEILWWGGVFLILCGLTLIHRKFPPTWKESKEQ.

Helical transmembrane passes span 37-57 (FWGV…AAAA), 67-87 (IGLC…MWTF), 100-120 (IASV…GYLL), and 124-144 (CQEI…TLIH).

It localises to the membrane. The polypeptide is Transmembrane protein 42 (Tmem42) (Mus musculus (Mouse)).